Reading from the N-terminus, the 128-residue chain is Flagellar assembly factor FliW 1 (128 aa).

It belongs to the FliW family. As to quaternary structure, interacts with translational regulator CsrA and flagellin(s).

It localises to the cytoplasm. In terms of biological role, acts as an anti-CsrA protein, binds CsrA and prevents it from repressing translation of its target genes, one of which is flagellin. Binds to flagellin and participates in the assembly of the flagellum. This chain is Flagellar assembly factor FliW 1, found in Wolinella succinogenes (strain ATCC 29543 / DSM 1740 / CCUG 13145 / JCM 31913 / LMG 7466 / NCTC 11488 / FDC 602W) (Vibrio succinogenes).